The sequence spans 502 residues: Glycerol kinase (502 aa).

Threonine 14 serves as a coordination point for ADP. Residues threonine 14, threonine 15, and serine 16 each coordinate ATP. Sn-glycerol 3-phosphate is bound at residue threonine 14. Arginine 18 is an ADP binding site. Sn-glycerol 3-phosphate contacts are provided by arginine 84, glutamate 85, tyrosine 136, and aspartate 246. 5 residues coordinate glycerol: arginine 84, glutamate 85, tyrosine 136, aspartate 246, and glutamine 247. ADP contacts are provided by threonine 268 and glycine 311. ATP-binding residues include threonine 268, glycine 311, glutamine 315, and glycine 412. ADP-binding residues include glycine 412 and asparagine 416.

The protein belongs to the FGGY kinase family. Homotetramer and homodimer (in equilibrium). Heterodimer with EIIA-Glc. Binds 1 zinc ion per glycerol kinase EIIA-Glc dimer. The zinc ion is important for dimerization.

It catalyses the reaction glycerol + ATP = sn-glycerol 3-phosphate + ADP + H(+). The protein operates within polyol metabolism; glycerol degradation via glycerol kinase pathway; sn-glycerol 3-phosphate from glycerol: step 1/1. With respect to regulation, activity of this regulatory enzyme is affected by several metabolites. Allosterically and non-competitively inhibited by fructose 1,6-bisphosphate (FBP) and unphosphorylated phosphocarrier protein EIIA-Glc (III-Glc), an integral component of the bacterial phosphotransferase (PTS) system. Functionally, key enzyme in the regulation of glycerol uptake and metabolism. Catalyzes the phosphorylation of glycerol to yield sn-glycerol 3-phosphate. This is Glycerol kinase from Escherichia coli O7:K1 (strain IAI39 / ExPEC).